The chain runs to 102 residues: Small ribosomal subunit protein uS10 (102 aa).

It belongs to the universal ribosomal protein uS10 family. As to quaternary structure, part of the 30S ribosomal subunit.

In terms of biological role, involved in the binding of tRNA to the ribosomes. In Allorhizobium ampelinum (strain ATCC BAA-846 / DSM 112012 / S4) (Agrobacterium vitis (strain S4)), this protein is Small ribosomal subunit protein uS10.